A 202-amino-acid polypeptide reads, in one-letter code: Pycsar effector protein PtPycTM (202 aa).

3 consecutive transmembrane segments (helical) span residues 60 to 80 (GVVLAFVGVMAAGLITIAADI), 85 to 105 (LVILCIEGAAAVLILASAVLA), and 181 to 201 (ILVGMLGLVCLFVLAAGVALG).

The protein resides in the cell membrane. In terms of biological role, pycsar (pyrimidine cyclase system for antiphage resistance) provides immunity against bacteriophage. The pyrimidine cyclase (PycC) synthesizes cyclic nucleotides in response to infection; these serve as specific second messenger signals. The signals activate the adjacent effector, leading to bacterial cell death and abortive phage infection. A clade D Pycsar system. Functionally, the effector gene of a two-gene Pycsar system. Expression of this and adjacent uridylate cyclase PtPycC (AC A0A4V2JTK3) probably confers resistance to bacteriophage. The genes are probably only expressed in response to bacteriophage infection. Probably only responds to cUMP (produced by its cognate NTP cyclase), acts by impairing membrane integrity. This is Pycsar effector protein PtPycTM from Propioniciclava tarda.